Consider the following 137-residue polypeptide: Large ribosomal subunit protein uL16 (137 aa).

Residues 1-13 (MLQPKRRKYRKEQ) are compositionally biased toward basic residues. Residues 1–22 (MLQPKRRKYRKEQKGRNTGVAT) form a disordered region.

This sequence belongs to the universal ribosomal protein uL16 family. In terms of assembly, part of the 50S ribosomal subunit.

In terms of biological role, binds 23S rRNA and is also seen to make contacts with the A and possibly P site tRNAs. The polypeptide is Large ribosomal subunit protein uL16 (Polynucleobacter asymbioticus (strain DSM 18221 / CIP 109841 / QLW-P1DMWA-1) (Polynucleobacter necessarius subsp. asymbioticus)).